A 356-amino-acid chain; its full sequence is GTPase Obg (356 aa).

Residues 1-159 (MKFLDEAKVY…RWIWLRMKLI (159 aa)) enclose the Obg domain. The region spanning 160 to 327 (ADAGLVGLPN…ALRKLADVVG (168 aa)) is the OBG-type G domain. Residues 166 to 173 (GLPNAGKS), 191 to 195 (FTTLH), 212 to 215 (DIPG), 279 to 282 (NKID), and 308 to 310 (SGA) each bind GTP. The Mg(2+) site is built by Ser-173 and Thr-193. The interval 327 to 356 (GEQPVSSKAKNAVESAATEEPWAAPVPPQG) is disordered.

Belongs to the TRAFAC class OBG-HflX-like GTPase superfamily. OBG GTPase family. Monomer. It depends on Mg(2+) as a cofactor.

It is found in the cytoplasm. Its function is as follows. An essential GTPase which binds GTP, GDP and possibly (p)ppGpp with moderate affinity, with high nucleotide exchange rates and a fairly low GTP hydrolysis rate. Plays a role in control of the cell cycle, stress response, ribosome biogenesis and in those bacteria that undergo differentiation, in morphogenesis control. This chain is GTPase Obg, found in Bradyrhizobium sp. (strain ORS 278).